The following is a 587-amino-acid chain: MTADLPYEIWMNIIEYLGNDTINLLLVSKYLFFLATFCNISKKKLYKSIIKNGYIDILKYIRELTVNGEISAKIKMDKNLSMLLATKYGKLNIIKYLVRNGTDIRICNNYPVRKASKYGYLDIVKYLIREDCDVSDYDNYALRKATKNGYFEIVKLLVDQGADVHCCDNAPIKLACKYGYSKMVKFFHKKFLDVNYDFNEDLLLKLASSGGHYKIVKYLVTKSNNIHFEDSLISVIKKGHLDILKYFISKGVILGNNKNIRNATLMACKKGHYNVVEYLIDNIISIENMKKKYSCDIEIDIFKKNLITNTCISGNLDMLKYLISKGINVAFEDNLPIKISACHDHLHLVKYLVSISNVKINYENILISASENGCIKVVKYLVDKGVNVKDNTAIYSAGINGYLQIVKFLESNGADLIKYHNEIFLECSSNGYLNVIKYIVSKYNINKSIYDKALIIASKNNQLKTVKYLVHMGADIKSIKFHDMEKIIDNDLELLKYLVSKGLKINNIYKNLISKIIMNNDLDKLKYLISLGVNMKCIRIDTFNSCIQNRNKEMLSYLISRKIKLICYCEEGTEEDSEEDTEEDSEN.

ANK repeat units follow at residues 77 to 106, 108 to 136, 137 to 166, 168 to 196, 199 to 228, 230 to 256, 259 to 288, 302 to 331, 333 to 360, 361 to 390, 392 to 418, 420 to 448, 449 to 478, 480 to 507, 509 to 537, and 539 to 567; these read DKNLSMLLATKYGKLNIIKYLVRNGTDIRI, NNYPVRKASKYGYLDIVKYLIREDCDVSD, YDNYALRKATKNGYFEIVKLLVDQGADVHC, DNAPIKLACKYGYSKMVKFFHKKFLDVNY, NEDLLLKLASSGGHYKIVKYLVTKSNNIHF, DSLISVIKKGHLDILKYFISKGVILGN, NIRNATLMACKKGHYNVVEYLIDNIISIEN, FKKNLITNTCISGNLDMLKYLISKGINVAF, DNLPIKISACHDHLHLVKYLVSISNVKI, NYENILISASENGCIKVVKYLVDKGVNVKD, TAIYSAGINGYLQIVKFLESNGADLIK, HNEIFLECSSNGYLNVIKYIVSKYNINKS, IYDKALIIASKNNQLKTVKYLVHMGADIKS, KFHDMEKIIDNDLELLKYLVSKGLKINN, YKNLISKIIMNNDLDKLKYLISLGVNMKC, and RIDTFNSCIQNRNKEMLSYLISRKIKLIC.

The chain is Putative ankyrin repeat protein L66 from Acanthamoeba polyphaga mimivirus (APMV).